Here is a 299-residue protein sequence, read N- to C-terminus: Tyrosine recombinase XerC (299 aa).

In terms of domain architecture, Core-binding (CB) spans 1 to 85; the sequence is MQNELDAYFE…SVRGLYRYLN (85 aa). Positions 106–285 constitute a Tyr recombinase domain; it reads RLPRLLDTDR…DFQHLAKVYD (180 aa). Catalysis depends on residues R146, K170, H237, R240, and H263. The O-(3'-phospho-DNA)-tyrosine intermediate role is filled by Y272.

It belongs to the 'phage' integrase family. XerC subfamily. Forms a cyclic heterotetrameric complex composed of two molecules of XerC and two molecules of XerD.

The protein localises to the cytoplasm. Site-specific tyrosine recombinase, which acts by catalyzing the cutting and rejoining of the recombining DNA molecules. The XerC-XerD complex is essential to convert dimers of the bacterial chromosome into monomers to permit their segregation at cell division. It also contributes to the segregational stability of plasmids. The sequence is that of Tyrosine recombinase XerC from Stutzerimonas stutzeri (strain A1501) (Pseudomonas stutzeri).